A 581-amino-acid polypeptide reads, in one-letter code: Adenine deaminase (581 aa).

It belongs to the metallo-dependent hydrolases superfamily. Adenine deaminase family. The cofactor is Mn(2+).

It carries out the reaction adenine + H2O + H(+) = hypoxanthine + NH4(+). The protein is Adenine deaminase of Clostridium botulinum (strain Eklund 17B / Type B).